The sequence spans 282 residues: Bis(5'-nucleosyl)-tetraphosphatase, symmetrical (282 aa).

Belongs to the Ap4A hydrolase family.

The catalysed reaction is P(1),P(4)-bis(5'-adenosyl) tetraphosphate + H2O = 2 ADP + 2 H(+). Functionally, hydrolyzes diadenosine 5',5'''-P1,P4-tetraphosphate to yield ADP. In Escherichia fergusonii (strain ATCC 35469 / DSM 13698 / CCUG 18766 / IAM 14443 / JCM 21226 / LMG 7866 / NBRC 102419 / NCTC 12128 / CDC 0568-73), this protein is Bis(5'-nucleosyl)-tetraphosphatase, symmetrical.